The following is a 168-amino-acid chain: Gamma-glutamylaminecyclotransferase (168 aa).

Residues 1 to 20 form a disordered region; sequence MPGPECKWSTTETGAPCGTD. 32–35 is a binding site for substrate; the sequence is YGTL. Glu-107 functions as the Proton acceptor in the catalytic mechanism.

This sequence belongs to the gamma-glutamylcyclotransferase family. Monomer.

The enzyme catalyses epsilon-(gamma-L-glutamyl)-L-lysine = 5-oxo-L-proline + L-lysine. Contributes to degradation of proteins cross-linked by transglutaminases by degrading the cross-link between a lysine and a glutamic acid residue. Catalyzes the formation of 5-oxo-L-proline from L-gamma-glutamyl-L-epsilon-lysine. Inactive with L-gamma-glutamyl-alpha-amino acid substrates such as L-gamma-glutamyl-L-alpha-cysteine and L-gamma-glutamyl-L-alpha-alanine. The polypeptide is Gamma-glutamylaminecyclotransferase (GGACT) (Bos taurus (Bovine)).